Consider the following 502-residue polypeptide: Hexokinase-9 (502 aa).

Residues 5 to 24 form a helical membrane-spanning segment; the sequence is AALASAAMAAAAVAVVSTVL. A Hexokinase domain is found at 37–488; sequence RAEAVLLRDL…SGVGAALLAA (452 aa). The hexokinase small subdomain stretch occupies residues 92–230; it reads SGGEKGMFYA…GLDMKVTALV (139 aa). Glycine 106, threonine 107, and asparagine 108 together coordinate ADP. Threonine 196, lysine 197, asparagine 231, and aspartate 232 together coordinate D-glucose. Residues 231-477 form a hexokinase large subdomain region; sequence NDTVGTLAAG…PSVMIKHVND (247 aa). Threonine 255 is an ADP binding site. Residues asparagine 258, glutamate 286, and glutamate 317 each coordinate D-glucose. Residue glycine 442 coordinates ADP.

Belongs to the hexokinase family. Expressed in roots, leaves, flowers, immature seeds, endosperm and seed coat.

It localises to the plastid. It is found in the chloroplast outer membrane. The enzyme catalyses a D-hexose + ATP = a D-hexose 6-phosphate + ADP + H(+). It carries out the reaction D-fructose + ATP = D-fructose 6-phosphate + ADP + H(+). It catalyses the reaction D-glucose + ATP = D-glucose 6-phosphate + ADP + H(+). It participates in carbohydrate metabolism; hexose metabolism. Its pathway is carbohydrate degradation; glycolysis; D-glyceraldehyde 3-phosphate and glycerone phosphate from D-glucose: step 1/4. Fructose and glucose phosphorylating enzyme. This chain is Hexokinase-9 (HXK9), found in Oryza sativa subsp. japonica (Rice).